Here is a 376-residue protein sequence, read N- to C-terminus: Carbamoyl phosphate synthase small chain (376 aa).

The CPSase stretch occupies residues 1–187 (MRAFLALEDG…AADGAYAWPG (187 aa)). Residues Ser45, Gly239, and Gly241 each coordinate L-glutamine. The 186-residue stretch at 191–376 (RLVVYDYGIK…RGMVREAVGR (186 aa)) folds into the Glutamine amidotransferase type-1 domain. The active-site Nucleophile is the Cys266. Residues Leu267, Gln270, Asn308, Gly310, and Phe311 each coordinate L-glutamine. Active-site residues include His349 and Glu351.

This sequence belongs to the CarA family. Composed of two chains; the small (or glutamine) chain promotes the hydrolysis of glutamine to ammonia, which is used by the large (or ammonia) chain to synthesize carbamoyl phosphate. Tetramer of heterodimers (alpha,beta)4.

The enzyme catalyses hydrogencarbonate + L-glutamine + 2 ATP + H2O = carbamoyl phosphate + L-glutamate + 2 ADP + phosphate + 2 H(+). It carries out the reaction L-glutamine + H2O = L-glutamate + NH4(+). It functions in the pathway amino-acid biosynthesis; L-arginine biosynthesis; carbamoyl phosphate from bicarbonate: step 1/1. The protein operates within pyrimidine metabolism; UMP biosynthesis via de novo pathway; (S)-dihydroorotate from bicarbonate: step 1/3. Small subunit of the glutamine-dependent carbamoyl phosphate synthetase (CPSase). CPSase catalyzes the formation of carbamoyl phosphate from the ammonia moiety of glutamine, carbonate, and phosphate donated by ATP, constituting the first step of 2 biosynthetic pathways, one leading to arginine and/or urea and the other to pyrimidine nucleotides. The small subunit (glutamine amidotransferase) binds and cleaves glutamine to supply the large subunit with the substrate ammonia. The sequence is that of Carbamoyl phosphate synthase small chain from Nitratidesulfovibrio vulgaris (strain DSM 19637 / Miyazaki F) (Desulfovibrio vulgaris).